Here is a 330-residue protein sequence, read N- to C-terminus: ADP-L-glycero-D-manno-heptose-6-epimerase (330 aa).

Residues 10–11, 31–32, Lys38, Lys53, 74–78, and Asn91 contribute to the NADP(+) site; these read FI, DD, and QGACS. The active-site Proton acceptor is Tyr138. Position 142 (Lys142) interacts with NADP(+). Position 167 (Asn167) interacts with substrate. Val168 and Lys176 together coordinate NADP(+). Lys176 functions as the Proton acceptor in the catalytic mechanism. Substrate is bound by residues Arg178, His185, 199–202, Arg212, and Tyr291; that span reads FAGW.

The protein belongs to the NAD(P)-dependent epimerase/dehydratase family. HldD subfamily. As to quaternary structure, homopentamer. NADP(+) serves as cofactor.

It carries out the reaction ADP-D-glycero-beta-D-manno-heptose = ADP-L-glycero-beta-D-manno-heptose. It participates in nucleotide-sugar biosynthesis; ADP-L-glycero-beta-D-manno-heptose biosynthesis; ADP-L-glycero-beta-D-manno-heptose from D-glycero-beta-D-manno-heptose 7-phosphate: step 4/4. Catalyzes the interconversion between ADP-D-glycero-beta-D-manno-heptose and ADP-L-glycero-beta-D-manno-heptose via an epimerization at carbon 6 of the heptose. This chain is ADP-L-glycero-D-manno-heptose-6-epimerase, found in Bordetella petrii (strain ATCC BAA-461 / DSM 12804 / CCUG 43448).